The sequence spans 318 residues: NAD(P)H-dependent D-xylose reductase (318 aa).

Y48 (proton donor) is an active-site residue. H110 provides a ligand contact to substrate. Residues S165 to N166, S214 to E223, and K270 to N280 each bind NAD(+).

This sequence belongs to the aldo/keto reductase family.

It carries out the reaction xylitol + NAD(+) = D-xylose + NADH + H(+). The catalysed reaction is xylitol + NADP(+) = D-xylose + NADPH + H(+). It functions in the pathway carbohydrate metabolism; D-xylose degradation. Reduces D-xylose into xylitol. Has a preference for NADPH, but can also utilize NADH as cosubstrate. The chain is NAD(P)H-dependent D-xylose reductase (XYL1) from Pachysolen tannophilus (Yeast).